Reading from the N-terminus, the 89-residue chain is MALLDFFLSRKKPTANIAKERLQIIVAERRRGDSEPHYLPDLKRDILAVICKYIQIDPEMLHVQFEQKGDDISVLELNVTLPETEETPK.

Belongs to the MinE family.

Functionally, prevents the cell division inhibition by proteins MinC and MinD at internal division sites while permitting inhibition at polar sites. This ensures cell division at the proper site by restricting the formation of a division septum at the midpoint of the long axis of the cell. This is Cell division topological specificity factor from Yersinia pestis bv. Antiqua (strain Angola).